Consider the following 227-residue polypeptide: MSKITKLFKSSGGSGSSSKNRKGPSAQEALFKLRETEEMLTKKQEYLEKKIELELATAKKHGTKNKRAALQALKKKKRLEKQLAQIDGTLSTIEFQREALENSHTNTEVLKNMGYAAKAMKAAHENMDLEKIDDLMQDIHEQQDVAQEISDAISRPVGFGDEFDEDELLEELEELEQEDLNSQMANVNLPSVPSSKLPSTKLPSRPASSRKKVEDDDDMQMLAAWAT.

Residues 1–27 (MSKITKLFKSSGGSGSSSKNRKGPSAQ) form a disordered region. Coiled coils occupy residues 32-94 (KLRE…STIE) and 129-187 (LEKI…MANV). A disordered region spans residues 178-227 (EDLNSQMANVNLPSVPSSKLPSTKLPSRPASSRKKVEDDDDMQMLAAWAT). Residues 189 to 206 (LPSVPSSKLPSTKLPSRP) show a composition bias toward low complexity.

It belongs to the SNF7 family. As to quaternary structure, probable core component of the endosomal sorting required for transport complex III (ESCRT-III). ESCRT-III components are thought to multimerize to form a flat lattice on the perimeter membrane of the endosome.

Its subcellular location is the cytoplasm. It is found in the cytosol. It localises to the late endosome membrane. Functionally, probable core component of the endosomal sorting required for transport complex III (ESCRT-III) which is involved in multivesicular bodies (MVBs) formation and sorting of endosomal cargo proteins into MVBs. MVBs contain intraluminal vesicles (ILVs) that are generated by invagination and scission from the limiting membrane of the endosome and mostly are delivered to lysosomes enabling degradation of membrane proteins, such as stimulated growth factor receptors, lysosomal enzymes and lipids. Key component of the cytokinesis checkpoint, a process required to delay abscission to prevent both premature resolution of intercellular chromosome bridges and accumulation of DNA damage. The sequence is that of Charged multivesicular body protein 4c (chmp4c) from Xenopus laevis (African clawed frog).